The sequence spans 160 residues: Ribosomal RNA large subunit methyltransferase H (160 aa).

Residues G108 and 127–132 (FGKMTW) each bind S-adenosyl-L-methionine.

This sequence belongs to the RNA methyltransferase RlmH family. Homodimer.

It localises to the cytoplasm. The catalysed reaction is pseudouridine(1915) in 23S rRNA + S-adenosyl-L-methionine = N(3)-methylpseudouridine(1915) in 23S rRNA + S-adenosyl-L-homocysteine + H(+). In terms of biological role, specifically methylates the pseudouridine at position 1915 (m3Psi1915) in 23S rRNA. The sequence is that of Ribosomal RNA large subunit methyltransferase H from Beijerinckia indica subsp. indica (strain ATCC 9039 / DSM 1715 / NCIMB 8712).